The primary structure comprises 248 residues: MSAATAPERGWKSEKVDEAQALARSCAARRPDFQPCDGLSICATHSHGKCFKLHWCCHLGWCHCKYVYQPMTPVEQLPSTEIPAKPREPTNTIQISVSLTEHFLKFASVFQPPLPPDSPRYCMISDLFIDNYQVKCINGKMCYVQKQQAPHSQKMSPEEVSAHDALISKESDTPKLGHCSSPSGSEDSGINAIGAHYVESCDEDTEEGAELSSEEDYSPESSWEPDECTLLSPSQSDLEVIETMETTV.

Positions 169–248 (KESDTPKLGH…EVIETMETTV (80 aa)) are disordered. The span at 200 to 227 (SCDEDTEEGAELSSEEDYSPESSWEPDE) shows a compositional bias: acidic residues.

It belongs to the UPF0524 family.

Functionally, may play a role in neuronal and neurobehavioral development. The chain is UPF0524 protein C3orf70 homolog from Mus musculus (Mouse).